Here is a 209-residue protein sequence, read N- to C-terminus: Large ribosomal subunit protein uL3 (209 aa).

Positions 126–148 (HGQSRGPMAHGSRYHRRPGSMGP) are disordered.

Belongs to the universal ribosomal protein uL3 family. In terms of assembly, part of the 50S ribosomal subunit. Forms a cluster with proteins L14 and L19.

In terms of biological role, one of the primary rRNA binding proteins, it binds directly near the 3'-end of the 23S rRNA, where it nucleates assembly of the 50S subunit. The polypeptide is Large ribosomal subunit protein uL3 (Listeria innocua serovar 6a (strain ATCC BAA-680 / CLIP 11262)).